A 1351-amino-acid polypeptide reads, in one-letter code: Serine-rich adhesin for platelets (1351 aa).

A signal peptide spans 1 to 89; that stretch reads MSKRQKEFHD…VNMLHDQQAF (89 aa). A serine-rich repeat region 1, SRR1 region spans residues 90–230; sequence AASDAPLTSE…KTSTTSTSTA (141 aa). Residues 100–111 are compositionally biased toward polar residues; it reads LNTQSETVGNQN. 2 disordered regions span residues 100-228 and 751-1323; these read LNTQ…TSTS and NSMS…GLLG. Low complexity-rich tracts occupy residues 112 to 133 and 149 to 228; these read STTIEASTSTTDSTSVTKNSSS and NVTS…TSTS. Residues 231-751 are non-repeat region (NRR); that stretch reads PIKLRTFSRL…TTFKYEVTRN (521 aa). Over residues 752–1294 the composition is skewed to low complexity; sequence SMSDSVSTSG…SQSTLSATSE (543 aa). The interval 752 to 1312 is serine-rich repeat region 1, SRR1; the sequence is SMSDSVSTSG…AQSEKRLPDT (561 aa). Residues 1309 to 1313 carry the LPXTG sorting signal motif; the sequence is LPDTG. At Thr1312 the chain carries Pentaglycyl murein peptidoglycan amidated threonine. A propeptide spans 1313-1351 (removed by sortase); sequence GDSIKQNGLLGGVMTLLVGLGLMKRKKKKDENDQDDSQA.

Belongs to the serine-rich repeat protein (SRRP) family. In terms of processing, proteolytically cleaved by a metalloprotease. Post-translationally, glycosylated. It is probable that most of the Ser residues in SSR1 and SSR2 are O-GlcNAcylated. Sequential glycosylation by sugar transferases are able to generate complex sugar polymorphisms.

It localises to the secreted. It is found in the cell wall. In terms of biological role, mediates binding to human platelets, possibly through a receptor-ligand interaction. Probably associated with virulence in endovascular infection. This is Serine-rich adhesin for platelets (sasA) from Staphylococcus aureus (strain MRSA252).